The chain runs to 110 residues: ATP-dependent Clp protease adapter protein ClpS 2 (110 aa).

The interval 1–24 is disordered; the sequence is MSNDENRSGSPTGPNTSVITKVKP. Positions 8–19 are enriched in polar residues; that stretch reads SGSPTGPNTSVI.

The protein belongs to the ClpS family. As to quaternary structure, binds to the N-terminal domain of the chaperone ClpA.

Its function is as follows. Involved in the modulation of the specificity of the ClpAP-mediated ATP-dependent protein degradation. This is ATP-dependent Clp protease adapter protein ClpS 2 from Bradyrhizobium diazoefficiens (strain JCM 10833 / BCRC 13528 / IAM 13628 / NBRC 14792 / USDA 110).